Consider the following 356-residue polypeptide: Probable neutral protease 2 homolog TRV_06370 (356 aa).

The signal sequence occupies residues 1–17 (MQFTALLAALGAPLALA). The propeptide occupies 18 to 183 (ASIPAAAHNH…DDSTGVIDKR (166 aa)). Intrachain disulfides connect cysteine 191/cysteine 262 and cysteine 269/cysteine 287. Histidine 311 is a Zn(2+) binding site. The active site involves glutamate 312. Zn(2+)-binding residues include histidine 315 and aspartate 326.

Belongs to the peptidase M35 family. Zn(2+) is required as a cofactor.

The protein localises to the secreted. It carries out the reaction Preferential cleavage of bonds with hydrophobic residues in P1'. Also 3-Asn-|-Gln-4 and 8-Gly-|-Ser-9 bonds in insulin B chain.. Probable secreted metalloprotease that shows high activities on basic nuclear substrates such as histone and protamine. May be involved in virulence. The sequence is that of Probable neutral protease 2 homolog TRV_06370 from Trichophyton verrucosum (strain HKI 0517).